The sequence spans 346 residues: UPF0718 protein YraQ (346 aa).

Helical transmembrane passes span 12 to 32 (PIQWWKPALFFLVVIAGLWYV), 71 to 91 (MIYFLAVWKAAVLGVILGSLI), 113 to 133 (LLGTLFSLPGMMCTCCAAPVA), 146 to 166 (ALAFWMGNPVLNPATLVFMGF), 167 to 187 (VLGWGFAAIRLVAGLVMVLLI), 223 to 243 (ALWTLFWSTIPVYILAVLVLG), 260 to 280 (SLMWVVAMAVAGCLFVIPTAA), 296 to 316 (APALALLMTLPAVSLPSLIML), and 326 to 346 (WLTGAMVAVSGVIVGGLALLF).

The protein belongs to the UPF0718 family.

The protein localises to the cell membrane. The polypeptide is UPF0718 protein YraQ (yraQ) (Escherichia coli (strain K12)).